We begin with the raw amino-acid sequence, 367 residues long: Methylthioribose-1-phosphate isomerase (367 aa).

Aspartate 250 acts as the Proton donor in catalysis.

This sequence belongs to the eIF-2B alpha/beta/delta subunits family. MtnA subfamily.

It is found in the cytoplasm. The protein resides in the nucleus. It catalyses the reaction 5-(methylsulfanyl)-alpha-D-ribose 1-phosphate = 5-(methylsulfanyl)-D-ribulose 1-phosphate. The protein operates within amino-acid biosynthesis; L-methionine biosynthesis via salvage pathway; L-methionine from S-methyl-5-thio-alpha-D-ribose 1-phosphate: step 1/6. Functionally, catalyzes the interconversion of methylthioribose-1-phosphate (MTR-1-P) into methylthioribulose-1-phosphate (MTRu-1-P). In Zea mays (Maize), this protein is Methylthioribose-1-phosphate isomerase (IDI2).